A 250-amino-acid chain; its full sequence is Triosephosphate isomerase (250 aa).

Residue 9–11 coordinates substrate; the sequence is NWK. Residue histidine 95 is the Electrophile of the active site. The active-site Proton acceptor is the glutamate 167. Substrate-binding positions include glycine 173, serine 212, and 233-234; that span reads GG.

Belongs to the triosephosphate isomerase family. Homodimer.

Its subcellular location is the cytoplasm. The catalysed reaction is D-glyceraldehyde 3-phosphate = dihydroxyacetone phosphate. The protein operates within carbohydrate biosynthesis; gluconeogenesis. It functions in the pathway carbohydrate degradation; glycolysis; D-glyceraldehyde 3-phosphate from glycerone phosphate: step 1/1. In terms of biological role, involved in the gluconeogenesis. Catalyzes stereospecifically the conversion of dihydroxyacetone phosphate (DHAP) to D-glyceraldehyde-3-phosphate (G3P). The chain is Triosephosphate isomerase from Endomicrobium trichonymphae.